The primary structure comprises 159 residues: Keratin-associated protein 6-2 (159 aa).

The tract at residues 11–147 (GYGCGYGSGY…SYYRSGCCGY (137 aa)) is 66 X 2 AA repeats of G-[YCGS].

The protein belongs to the KRTAP type 6 family. In terms of assembly, interacts with hair keratins. In terms of tissue distribution, expressed in skin during two hair growth cycles. Expression restricted to the cortical cells of hair follicles, appearing first in the cortical cells processing the flat nuclei located a few cells above the dermal papilla.

Its function is as follows. In the hair cortex, hair keratin intermediate filaments are embedded in an interfilamentous matrix, consisting of hair keratin-associated proteins (KRTAP), which are essential for the formation of a rigid and resistant hair shaft through their extensive disulfide bond cross-linking with abundant cysteine residues of hair keratins. The matrix proteins include the high-sulfur and high-glycine-tyrosine keratins. The sequence is that of Keratin-associated protein 6-2 from Mus musculus (Mouse).